The chain runs to 227 residues: ATP phosphoribosyltransferase (227 aa).

Belongs to the ATP phosphoribosyltransferase family. Short subfamily. In terms of assembly, heteromultimer composed of HisG and HisZ subunits.

It localises to the cytoplasm. The enzyme catalyses 1-(5-phospho-beta-D-ribosyl)-ATP + diphosphate = 5-phospho-alpha-D-ribose 1-diphosphate + ATP. It participates in amino-acid biosynthesis; L-histidine biosynthesis; L-histidine from 5-phospho-alpha-D-ribose 1-diphosphate: step 1/9. Catalyzes the condensation of ATP and 5-phosphoribose 1-diphosphate to form N'-(5'-phosphoribosyl)-ATP (PR-ATP). Has a crucial role in the pathway because the rate of histidine biosynthesis seems to be controlled primarily by regulation of HisG enzymatic activity. The sequence is that of ATP phosphoribosyltransferase from Bordetella avium (strain 197N).